Consider the following 411-residue polypeptide: Serine--tRNA ligase (411 aa).

226-228 (TSE) is a binding site for L-serine. 257 to 259 (RKE) serves as a coordination point for ATP. L-serine is bound at residue Glu-280. ATP is bound at residue 344–347 (EISS). Ser-379 is a binding site for L-serine.

The protein belongs to the class-II aminoacyl-tRNA synthetase family. Type-1 seryl-tRNA synthetase subfamily. In terms of assembly, homodimer. The tRNA molecule binds across the dimer.

It localises to the cytoplasm. The enzyme catalyses tRNA(Ser) + L-serine + ATP = L-seryl-tRNA(Ser) + AMP + diphosphate + H(+). It carries out the reaction tRNA(Sec) + L-serine + ATP = L-seryl-tRNA(Sec) + AMP + diphosphate + H(+). Its pathway is aminoacyl-tRNA biosynthesis; selenocysteinyl-tRNA(Sec) biosynthesis; L-seryl-tRNA(Sec) from L-serine and tRNA(Sec): step 1/1. Catalyzes the attachment of serine to tRNA(Ser). Is also able to aminoacylate tRNA(Sec) with serine, to form the misacylated tRNA L-seryl-tRNA(Sec), which will be further converted into selenocysteinyl-tRNA(Sec). This is Serine--tRNA ligase from Campylobacter jejuni subsp. jejuni serotype O:2 (strain ATCC 700819 / NCTC 11168).